We begin with the raw amino-acid sequence, 551 residues long: mRNA cap guanine-N(7) methyltransferase (551 aa).

Residues 1–10 (MENRSSSGTP) are compositionally biased toward polar residues. The segment at 1–152 (MENRSSSGTP…DRETLRRRQE (152 aa)) is disordered. Basic and acidic residues-rich tracts occupy residues 48-76 (VTEE…EERH) and 141-152 (LVDRETLRRRQE). The 358-residue stretch at 194–551 (SKIKGLRSFN…FYHAFCFYKV (358 aa)) folds into the mRNA cap 0 methyltransferase domain. 203–204 (NN) is an mRNA binding site. S-adenosyl-L-methionine contacts are provided by residues Lys-207, Gly-250, Asp-274, Asp-312, 355–357 (MFA), and Tyr-360. Positions 407 to 430 (KAREEQEKKEKSDEAPEDGEVEED) are disordered. Over residues 408-420 (AREEQEKKEKSDE) the composition is skewed to basic and acidic residues. Over residues 421–430 (APEDGEVEED) the composition is skewed to acidic residues.

The protein belongs to the class I-like SAM-binding methyltransferase superfamily. mRNA cap 0 methyltransferase family.

The protein resides in the nucleus. It carries out the reaction a 5'-end (5'-triphosphoguanosine)-ribonucleoside in mRNA + S-adenosyl-L-methionine = a 5'-end (N(7)-methyl 5'-triphosphoguanosine)-ribonucleoside in mRNA + S-adenosyl-L-homocysteine. Its function is as follows. Responsible for methylating the 5'-cap structure of mRNAs. In Aspergillus clavatus (strain ATCC 1007 / CBS 513.65 / DSM 816 / NCTC 3887 / NRRL 1 / QM 1276 / 107), this protein is mRNA cap guanine-N(7) methyltransferase (abd1).